Reading from the N-terminus, the 575-residue chain is RecBCD enzyme subunit RecD (575 aa).

170–177 serves as a coordination point for ATP; it reads GGPGTGKT.

This sequence belongs to the RecD family. In terms of assembly, heterotrimer of RecB, RecC and RecD. All subunits contribute to DNA-binding.

It catalyses the reaction Couples ATP hydrolysis with the unwinding of duplex DNA at the replication fork by translocating in the 5'-3' direction. This creates two antiparallel DNA single strands (ssDNA). The leading ssDNA polymer is the template for DNA polymerase III holoenzyme which synthesizes a continuous strand.. It carries out the reaction ATP + H2O = ADP + phosphate + H(+). In terms of biological role, a helicase/nuclease that prepares dsDNA breaks (DSB) for recombinational DNA repair. Binds to DSBs and unwinds DNA via a highly rapid and processive ATP-dependent bidirectional helicase activity. Holoenzyme degrades any linearized DNA that is unable to undergo homologous recombination. In the holoenzyme this subunit has ssDNA-dependent ATPase and 5'-3' helicase activity. When added to pre-assembled RecBC greatly stimulates nuclease activity and augments holoenzyme processivity. Unlike the case in E.coli, suppresses RecA-dependent homologous recombination, is instead required for single-strand annealing pathway repair of DSB. A helicase/nuclease that prepares dsDNA breaks (DSB) for recombinational DNA repair. Binds to DSBs and unwinds DNA via a highly rapid and processive ATP-dependent bidirectional helicase activity. Unwinds dsDNA until it encounters a Chi (crossover hotspot instigator) sequence from the 3' direction. Cuts ssDNA a few nucleotides 3' to the Chi site. The properties and activities of the enzyme are changed at Chi. The Chi-altered holoenzyme produces a long 3'-ssDNA overhang and facilitates RecA-binding to the ssDNA for homologous DNA recombination and repair. Holoenzyme degrades any linearized DNA that is unable to undergo homologous recombination. In the holoenzyme this subunit has ssDNA-dependent ATPase and 5'-3' helicase activity. When added to pre-assembled RecBC greatly stimulates nuclease activity and augments holoenzyme processivity. Negatively regulates the RecA-loading ability of RecBCD. The protein is RecBCD enzyme subunit RecD of Mycobacterium tuberculosis (strain CDC 1551 / Oshkosh).